Here is a 342-residue protein sequence, read N- to C-terminus: Nucleoid-associated protein Sfri_2491 (342 aa).

The protein belongs to the YejK family.

The protein resides in the cytoplasm. The protein localises to the nucleoid. The chain is Nucleoid-associated protein Sfri_2491 from Shewanella frigidimarina (strain NCIMB 400).